The sequence spans 1037 residues: Probable aminoglycoside efflux pump (1037 aa).

Residues 1 to 9 (MANFFIDRP) lie on the Cytoplasmic side of the membrane. A helical membrane pass occupies residues 10-28 (IFAWVLAILLCLTGTLAIF). The Periplasmic portion of the chain corresponds to 29–339 (SLPVEQYPDL…TSFVKASIED (311 aa)). Residues 340 to 359 (VVKTLLEAIALVFLVMYLFL) form a helical membrane-spanning segment. Residues 360-365 (QNFRAT) are Cytoplasmic-facing. Residues 366–385 (LIPTIAVPVVLMGTFSVLYA) form a helical membrane-spanning segment. The Periplasmic segment spans residues 386–391 (FGYSVN). A helical membrane pass occupies residues 392 to 413 (TLTMFAMVLAIGLLVDDAIVVV). Residues 414–441 (ENVERIMSEEGLTPREATRKSMGQIQGA) are Cytoplasmic-facing. Residues 442-460 (LVGIAMVLSAVFVPMAFFG) form a helical membrane-spanning segment. At 461-473 (GTTGAIYRQFSIT) the chain is on the periplasmic side. The chain crosses the membrane as a helical span at residues 474 to 496 (IVAAMVLSVLVAMILTPALCATL). The Cytoplasmic portion of the chain corresponds to 497-537 (LKPLKKGEHHGQKGFFAWFNQMFNRNAERYEKGVAKILHRS). Residues 538-556 (LRWIVIYVLLLGGMVFLFL) traverse the membrane as a helical segment. At 557–870 (RLPTSFLPLE…SYQERLSGAQ (314 aa)) the chain is on the periplasmic side. The helical transmembrane segment at 871-890 (APALYAISLLVVFLCLAALY) threads the bilayer. The Cytoplasmic segment spans residues 891-896 (ESWSVP). Residues 897 to 916 (FSVMLVVPLGVIGALLATWM) traverse the membrane as a helical segment. Residues 917–922 (RGLEND) lie on the Periplasmic side of the membrane. Residues 923 to 944 (VYFQVGLLTVIGLSAKNAILIV) traverse the membrane as a helical segment. Topologically, residues 945–971 (EFANEMNQKGHDLFEATLHACRQRLRP) are cytoplasmic. A helical membrane pass occupies residues 972-990 (ILMTSLAFIFGVLPMATST). Residues 991–1003 (GAGSGGQHAVGTG) lie on the Periplasmic side of the membrane. The helical transmembrane segment at 1004-1026 (VMGGMISATILAIYFVPLFFVLV) threads the bilayer. Over 1027-1037 (RRRFPLKPRPE) the chain is Cytoplasmic.

It belongs to the resistance-nodulation-cell division (RND) (TC 2.A.6) family.

It is found in the cell inner membrane. Participates in the efflux of aminoglycosides. Confers resistance to a variety of these substances. The chain is Probable aminoglycoside efflux pump (acrD) from Escherichia coli (strain K12).